The primary structure comprises 254 residues: MCSCLVVKNTVIGSGRTKIAVPLVARDAAELSAVLEQIKNMPFDIAEFRADFLECAGSIGEILHHTQTVRDALPDKPLLFTFRRHGEGGSFPCSDDYYFELLDALIESRLPDIIDIELFSGETAVRCAVANAQKNGIAALLCNHEFHRTPPQEEIVCRLKQMEDCGADICKIAVMPQSAEDVLTLLSATLKAKELAAKPIVTMSMGQTGAVSRLAGQVFGSSITFGSGTQNSAPGQIGVSALRATLDCLENGAD.

3-dehydroquinate-binding positions include 47-49 and arginine 83; that span reads EFR. The Proton donor/acceptor role is filled by histidine 144. Lysine 171 (schiff-base intermediate with substrate) is an active-site residue. 3-dehydroquinate contacts are provided by arginine 213, serine 232, and glutamine 236.

This sequence belongs to the type-I 3-dehydroquinase family. Homodimer.

It catalyses the reaction 3-dehydroquinate = 3-dehydroshikimate + H2O. It functions in the pathway metabolic intermediate biosynthesis; chorismate biosynthesis; chorismate from D-erythrose 4-phosphate and phosphoenolpyruvate: step 3/7. Its function is as follows. Involved in the third step of the chorismate pathway, which leads to the biosynthesis of aromatic amino acids. Catalyzes the cis-dehydration of 3-dehydroquinate (DHQ) and introduces the first double bond of the aromatic ring to yield 3-dehydroshikimate. This Neisseria meningitidis serogroup B (strain ATCC BAA-335 / MC58) protein is 3-dehydroquinate dehydratase.